A 192-amino-acid polypeptide reads, in one-letter code: Orotate phosphoribosyltransferase 2 (192 aa).

116 to 124 serves as a coordination point for 5-phospho-alpha-D-ribose 1-diphosphate; that stretch reads EDIVTTGLS. Orotate contacts are provided by Thr-120 and Arg-148.

Belongs to the purine/pyrimidine phosphoribosyltransferase family. PyrE subfamily. In terms of assembly, homodimer. Mg(2+) serves as cofactor.

The enzyme catalyses orotidine 5'-phosphate + diphosphate = orotate + 5-phospho-alpha-D-ribose 1-diphosphate. Its pathway is pyrimidine metabolism; UMP biosynthesis via de novo pathway; UMP from orotate: step 1/2. Its function is as follows. Catalyzes the transfer of a ribosyl phosphate group from 5-phosphoribose 1-diphosphate to orotate, leading to the formation of orotidine monophosphate (OMP). The protein is Orotate phosphoribosyltransferase 2 of Mesorhizobium japonicum (strain LMG 29417 / CECT 9101 / MAFF 303099) (Mesorhizobium loti (strain MAFF 303099)).